Reading from the N-terminus, the 364-residue chain is Mannose-1-phosphate guanyltransferase (364 aa).

It belongs to the transferase hexapeptide repeat family.

Its subcellular location is the cytoplasm. It carries out the reaction alpha-D-mannose 1-phosphate + GTP + H(+) = GDP-alpha-D-mannose + diphosphate. Its pathway is nucleotide-sugar biosynthesis; GDP-alpha-D-mannose biosynthesis; GDP-alpha-D-mannose from alpha-D-mannose 1-phosphate (GTP route): step 1/1. Its function is as follows. Involved in cell wall synthesis where it is required for glycosylation. Involved in cell cycle progression through cell-size checkpoint. The sequence is that of Mannose-1-phosphate guanyltransferase (mpg1) from Aspergillus oryzae (strain ATCC 42149 / RIB 40) (Yellow koji mold).